Reading from the N-terminus, the 116-residue chain is Large ribosomal subunit protein uL18 (116 aa).

The protein belongs to the universal ribosomal protein uL18 family. Part of the 50S ribosomal subunit; part of the 5S rRNA/L5/L18/L25 subcomplex. Contacts the 5S and 23S rRNAs.

This is one of the proteins that bind and probably mediate the attachment of the 5S RNA into the large ribosomal subunit, where it forms part of the central protuberance. The sequence is that of Large ribosomal subunit protein uL18 from Pseudomonas putida (strain W619).